A 370-amino-acid polypeptide reads, in one-letter code: MLRRMGDASLTTELGRVLVTGGAGFVGANLVTTLLDRGHWVRSFDRAPSLLPAHPQLEVLQGDITDADVCAAAVDGIDTIFHTAAIIELMGGASVTDEYRQRSFAVNVGGTENLLHAGQRAGVQRFVYTSSNSVVMGGQNIAGGDETLPYTDRFNDLYTETKVVAERFVLAQNGVDGMLTCAIRPSGIWGNGDQTMFRKLFESVLKGHVKVLVGRKSARLDNSYVHNLIHGFILAAAHLVPDGTAPGQAYFINDAEPINMFEFARPVLEACGQRWPKMRISGPAVRWVMTGWQRLHFRFGFPAPLLEPLAVERLYLDNYFSIAKARRDLGYEPLFTTQQALTECLPYYVSLFEQMKNEARAEKTAATVKP.

Residue Y158 is the Proton acceptor of the active site. An NAD(+)-binding site is contributed by K162.

It belongs to the 3-beta-HSD family. As to quaternary structure, monomer.

It is found in the cytoplasm. The catalysed reaction is a 3beta-hydroxy-Delta(5)-steroid + NAD(+) = a 3-oxo-Delta(5)-steroid + NADH + H(+). It carries out the reaction cholesterol + NAD(+) = cholest-5-en-3-one + NADH + H(+). The enzyme catalyses pregnenolone + NAD(+) = pregn-5-ene-3,20-dione + NADH + H(+). It catalyses the reaction 3beta-hydroxyandrost-5-en-17-one + NAD(+) = androst-5-ene-3,17-dione + NADH + H(+). The catalysed reaction is a 3-oxo-Delta(5)-steroid = a 3-oxo-Delta(4)-steroid. It carries out the reaction cholest-5-en-3-one = cholest-4-en-3-one. The enzyme catalyses pregn-5-ene-3,20-dione = progesterone. It catalyses the reaction androst-5-ene-3,17-dione = androst-4-ene-3,17-dione. Its pathway is lipid metabolism; steroid biosynthesis. Its function is as follows. 3-beta-HSD is a bifunctional enzyme, that catalyzes the oxidation and isomerization of cholesterol, pregnenolone, and dehydroepiandrosterone (DHEA) into cholest-4-en-3-one, progesterone, and androsterone, respectively. The sequence is that of 3 beta-hydroxysteroid dehydrogenase/Delta 5--&gt;4-isomerase from Mycobacterium tuberculosis (strain CDC 1551 / Oshkosh).